The following is a 405-amino-acid chain: Arginine biosynthesis bifunctional protein ArgJ (405 aa).

Residues T167, K190, T201, E281, N400, and S405 each coordinate substrate. The active-site Nucleophile is the T201.

Belongs to the ArgJ family. Heterotetramer of two alpha and two beta chains.

Its subcellular location is the cytoplasm. The catalysed reaction is N(2)-acetyl-L-ornithine + L-glutamate = N-acetyl-L-glutamate + L-ornithine. It carries out the reaction L-glutamate + acetyl-CoA = N-acetyl-L-glutamate + CoA + H(+). It functions in the pathway amino-acid biosynthesis; L-arginine biosynthesis; L-ornithine and N-acetyl-L-glutamate from L-glutamate and N(2)-acetyl-L-ornithine (cyclic): step 1/1. Its pathway is amino-acid biosynthesis; L-arginine biosynthesis; N(2)-acetyl-L-ornithine from L-glutamate: step 1/4. In terms of biological role, catalyzes two activities which are involved in the cyclic version of arginine biosynthesis: the synthesis of N-acetylglutamate from glutamate and acetyl-CoA as the acetyl donor, and of ornithine by transacetylation between N(2)-acetylornithine and glutamate. The sequence is that of Arginine biosynthesis bifunctional protein ArgJ from Nocardia farcinica (strain IFM 10152).